Here is a 169-residue protein sequence, read N- to C-terminus: Cell division inhibitor SulA (169 aa).

The tract at residues 106–112 (ALRTGNY) is ftsZ binding. The interval 162–169 (KIHSNLYH) is lon protease binding.

It belongs to the SulA family. In terms of assembly, interacts with FtsZ. Is rapidly cleaved and degraded by the Lon protease once DNA damage is repaired.

Its function is as follows. Component of the SOS system and an inhibitor of cell division. Accumulation of SulA causes rapid cessation of cell division and the appearance of long, non-septate filaments. In the presence of GTP, binds a polymerization-competent form of FtsZ in a 1:1 ratio, thus inhibiting FtsZ polymerization and therefore preventing it from participating in the assembly of the Z ring. This mechanism prevents the premature segregation of damaged DNA to daughter cells during cell division. This Shigella flexneri serotype 5b (strain 8401) protein is Cell division inhibitor SulA.